We begin with the raw amino-acid sequence, 79 residues long: Antimicrobial peptide UyCT1 (79 aa).

An N-terminal signal peptide occupies residues 1 to 23 (MKTQLAFLAITVILMQLFAQTEA). At I37 the chain carries Isoleucine amide. A propeptide spanning residues 41 to 79 (GLRNVDQIADLFDSGLSDADDLFDSGLSDADAKFMKMFM) is cleaved from the precursor.

It belongs to the non-disulfide-bridged peptide (NDBP) superfamily. Short antimicrobial peptide (group 4) family. As to expression, expressed by the venom gland.

It localises to the secreted. The protein localises to the target cell membrane. Inhibits the growth of Gram-positive (S.aureus, MIC=15 uM) and Gram-negative bacteria (E.coli, MIC=10 uM and P.aeruginosa, MIC=10 uM). It also shows 26% of hemolysis when 15 uM are tested (81% at 50 uM). Functionally, inhibits the growth of Gram-negative bacteria (E.coli, MIC=25 uM and P.aeruginosa, MIC=40 uM). It also shows 7% of hemolysis when 50 uM are tested. Does not show activity against the Gram-positive bacteria S.aureus. The chain is Antimicrobial peptide UyCT1 from Urodacus yaschenkoi (Inland robust scorpion).